Reading from the N-terminus, the 388-residue chain is Sex-determination protein fem-3 (388 aa).

Repeat copies occupy residues 7-10 (SDDV), 110-113 (ITRF), 141-144 (ITRF), 234-237 (YHTT), 284-287 (YHTT), and 371-374 (SDDV).

As to quaternary structure, component of a complex containing fem-1, fem-2 and fem-3. Interacts with fem-1 and fem-2 (via N-terminus). Part of a E3 ubiquitin-protein ligase complex, at least composed of cul-2, elc-1, tra-1, fem-1, fem-2 and fem-3; mediates the ubiquitination and subsequent proteasomal degradation of tra-1. Interacts with tra-1. Interacts with sel-10. Interacts with tra-2.

Functionally, required for male development. In XO (male) animals, fem-3 directs male differentiation in all tissues. In XX (hermaphrodite) animals, it specifies the first 80 or so germ cells to be sperm. Negatively regulates male development when bound to tra-2. Together with fem-2 associates with the CBC(fem-1) E3 ubiquitin-protein ligase complex which mediates the ubiquitination and subsequent proteasomal degradation of tra-1. In Caenorhabditis elegans, this protein is Sex-determination protein fem-3 (fem-3).